Reading from the N-terminus, the 142-residue chain is Hemoglobin subunit alpha-A (142 aa).

Positions 2–142 (VLSANDKTNV…VGNVLTAKYR (141 aa)) constitute a Globin domain. An O2-binding site is contributed by histidine 59. Heme b is bound at residue histidine 88.

It belongs to the globin family. In terms of assembly, heterotetramer of two alpha chains and two beta chains. As to expression, red blood cells.

Involved in oxygen transport from the lung to the various peripheral tissues. This Accipiter gentilis (Northern goshawk) protein is Hemoglobin subunit alpha-A (HBAA).